The chain runs to 169 residues: Large ribosomal subunit protein uL18 (169 aa).

It belongs to the universal ribosomal protein uL18 family. As to quaternary structure, part of the 50S ribosomal subunit. Contacts the 5S and 23S rRNAs.

Its function is as follows. This is one of the proteins that bind and probably mediate the attachment of the 5S RNA into the large ribosomal subunit, where it forms part of the central protuberance. This is Large ribosomal subunit protein uL18 from Methanothrix thermoacetophila (strain DSM 6194 / JCM 14653 / NBRC 101360 / PT) (Methanosaeta thermophila).